Consider the following 785-residue polypeptide: 1-phosphatidylinositol 4,5-bisphosphate phosphodiesterase delta-3 (785 aa).

A disordered region spans residues 1 to 43; the sequence is MLCGGWKRSRRSPEESRVSAQVAAPLAFPPSPASSDSSTKRPG. In terms of domain architecture, PH spans 65–168; the sequence is SRLLKIRSRT…WVRGLAKLRA (104 aa). The segment at 69 to 97 is substrate binding; the sequence is KIRSRTWHKERLYRLQEDGLSVWFQRRIP. Position 101 is a phosphoserine (Ser-101). 3 consecutive EF-hand domains span residues 178–213, 214–249, and 246–281; these read RLDH…VNVD, MNDM…LLKR, and LLKR…QGED. Positions 191, 193, 195, 197, 202, 227, 229, 231, 233, and 238 each coordinate Ca(2+). One can recognise a PI-PLC X-box domain in the interval 333–478; it reads QDMGQPLAHY…LKGRILVKGK (146 aa). Residue His-348 is part of the active site. Residues Asn-349, Glu-378, and Asp-380 each coordinate Ca(2+). The active site involves His-393. Residue Glu-427 coordinates Ca(2+). Substrate is bound by residues Lys-476 and Lys-478. Basic and acidic residues predominate over residues 484 to 493; the sequence is RSEDGRILSD. Residues 484 to 517 form a disordered region; the sequence is RSEDGRILSDREEEEEEEEEAEEALEAAEQRSRA. Position 492 is a phosphoserine (Ser-492). A compositionally biased stretch (acidic residues) spans 494–509; it reads REEEEEEEEEAEEALE. A PI-PLC Y-box domain is found at 524 to 640; the sequence is LSALAVYCCA…GYVLKPAYLR (117 aa). Ser-553 is a binding site for substrate. Residue Ser-569 is modified to Phosphoserine. Residue Arg-580 participates in substrate binding. Residues 636 to 765 form the C2 domain; it reads PAYLRQLNTT…QGYRHIHLLS (130 aa). Ca(2+) is bound by residues Ile-679, Asp-681, Asn-705, Asp-734, Tyr-735, and Asp-736.

It depends on Ca(2+) as a cofactor. As to expression, expressed in cerebellum and cerebral cortex.

It is found in the membrane. It localises to the cytoplasm. Its subcellular location is the cleavage furrow. The catalysed reaction is a 1,2-diacyl-sn-glycero-3-phospho-(1D-myo-inositol-4,5-bisphosphate) + H2O = 1D-myo-inositol 1,4,5-trisphosphate + a 1,2-diacyl-sn-glycerol + H(+). Strongly activated by phosphatidic acid. Inhibited by phosphatidylethanolamine (PtdEtn), phosphatidylcholine (PtdCho), sphingomyelin and phosphatidylserine (PtdSer). Its function is as follows. Hydrolyzes the phosphatidylinositol 4,5-bisphosphate (PIP2) to generate 2 second messenger molecules diacylglycerol (DAG) and inositol 1,4,5-trisphosphate (IP3). DAG mediates the activation of protein kinase C (PKC), while IP3 releases Ca(2+) from intracellular stores. Essential for trophoblast and placental development. May participate in cytokinesis by hydrolyzing PIP2 at the cleavage furrow. Regulates neurite outgrowth through the inhibition of RhoA/Rho kinase signaling. The sequence is that of 1-phosphatidylinositol 4,5-bisphosphate phosphodiesterase delta-3 from Mus musculus (Mouse).